The primary structure comprises 257 residues: Phosphatidylglycerol--prolipoprotein diacylglyceryl transferase (257 aa).

7 helical membrane-spanning segments follow: residues 13–33, 49–69, 88–108, 123–143, 152–172, 185–202, and 223–243; these read IGPI…AIGG, FLLN…RLMF, IYEG…AGLY, FAVL…IFNQ, FAFG…ILLI, GYQF…RGLI, and IGFF…AYWM. Arginine 136 lines the a 1,2-diacyl-sn-glycero-3-phospho-(1'-sn-glycerol) pocket.

Belongs to the Lgt family.

The protein localises to the cell membrane. The catalysed reaction is L-cysteinyl-[prolipoprotein] + a 1,2-diacyl-sn-glycero-3-phospho-(1'-sn-glycerol) = an S-1,2-diacyl-sn-glyceryl-L-cysteinyl-[prolipoprotein] + sn-glycerol 1-phosphate + H(+). Its pathway is protein modification; lipoprotein biosynthesis (diacylglyceryl transfer). Its function is as follows. Catalyzes the transfer of the diacylglyceryl group from phosphatidylglycerol to the sulfhydryl group of the N-terminal cysteine of a prolipoprotein, the first step in the formation of mature lipoproteins. This Thermoanaerobacter pseudethanolicus (strain ATCC 33223 / 39E) (Clostridium thermohydrosulfuricum) protein is Phosphatidylglycerol--prolipoprotein diacylglyceryl transferase.